The following is a 40-amino-acid chain: uncharacterized protein (40 aa).

This is an uncharacterized protein from Streptomyces peucetius.